The sequence spans 85 residues: Large ribosomal subunit protein bL27 (85 aa).

The disordered stretch occupies residues Met-1–Lys-24.

The protein belongs to the bacterial ribosomal protein bL27 family.

The sequence is that of Large ribosomal subunit protein bL27 from Syntrophus aciditrophicus (strain SB).